A 137-amino-acid chain; its full sequence is Crustacean hyperglycemic hormones (137 aa).

A signal peptide spans Met1–Gly28. Residue Gln64 is modified to Pyrrolidone carboxylic acid. Position 66 is a D-phenylalanine; in form CHH-II (Phe66). Disulfide bonds link Cys70–Cys106, Cys86–Cys102, and Cys89–Cys115. The residue at position 135 (Val135) is a Valine amide.

This sequence belongs to the arthropod CHH/MIH/GIH/VIH hormone family. In terms of tissue distribution, produced by the medulla terminalis X-organ in the eyestalks and transported to the sinus gland where they are stored and released.

The protein localises to the secreted. Hormone found in the sinus gland of isopods and decapods which controls the blood sugar level. Has a secretagogue action over the amylase released from the midgut gland. May act as a stress hormone and may be involved in the control of molting and reproduction. The chain is Crustacean hyperglycemic hormones from Procambarus clarkii (Red swamp crayfish).